We begin with the raw amino-acid sequence, 266 residues long: 22 kDa alpha-zein 14 (266 aa).

An N-terminal signal peptide occupies residues 1–21 (MATKILSLLALLALFASATNA).

The protein belongs to the zein family.

Functionally, zeins are major seed storage proteins. The chain is 22 kDa alpha-zein 14 from Zea mays (Maize).